A 269-amino-acid chain; its full sequence is 3-methyl-2-oxobutanoate hydroxymethyltransferase (269 aa).

2 residues coordinate Mg(2+): Asp51 and Asp90. Residues 51-52, Asp90, and Lys120 contribute to the 3-methyl-2-oxobutanoate site; that span reads DS. Residue Glu122 participates in Mg(2+) binding. The active-site Proton acceptor is Glu187.

The protein belongs to the PanB family. Homodecamer; pentamer of dimers. Requires Mg(2+) as cofactor.

The protein localises to the cytoplasm. It carries out the reaction 3-methyl-2-oxobutanoate + (6R)-5,10-methylene-5,6,7,8-tetrahydrofolate + H2O = 2-dehydropantoate + (6S)-5,6,7,8-tetrahydrofolate. The protein operates within cofactor biosynthesis; (R)-pantothenate biosynthesis; (R)-pantoate from 3-methyl-2-oxobutanoate: step 1/2. Catalyzes the reversible reaction in which hydroxymethyl group from 5,10-methylenetetrahydrofolate is transferred onto alpha-ketoisovalerate to form ketopantoate. This Tropheryma whipplei (strain TW08/27) (Whipple's bacillus) protein is 3-methyl-2-oxobutanoate hydroxymethyltransferase.